A 154-amino-acid polypeptide reads, in one-letter code: Lymphocyte antigen 6K (154 aa).

An N-terminal signal peptide occupies residues 1 to 20 (MAFLVALLVVLGLQLVQSNA). Residues 21–117 (LTCHVCEAQN…NGEGPPTDQL (97 aa)) form the UPAR/Ly6 domain. Residue Gly-123 is the site of GPI-anchor amidated glycine attachment. Positions 124–154 (KASGRRHRYIELLLTGFMVLTANGLSALCLL) are cleaved as a propeptide — removed in mature form.

Interacts with ADAM3 and TEX101. As to expression, strongly expressed in testes and weakly expressed in the epididymis, ovary, and uterus. Expressed in testicular germ cells (TGCs). Expressed in the testicular seminiferous tubules, in spermatocytes, spermatids, and testicular spermatozoa.

The protein localises to the secreted. It is found in the cytoplasm. Its subcellular location is the cell membrane. The protein resides in the cytoplasmic vesicle. It localises to the secretory vesicle. The protein localises to the acrosome. It is found in the membrane raft. Its function is as follows. Required for sperm migration into the oviduct and male fertility by controlling binding of sperm to zona pellucida. May play a role in cell growth. The polypeptide is Lymphocyte antigen 6K (Mus musculus (Mouse)).